The sequence spans 445 residues: UDP-N-acetylmuramoylalanine--D-glutamate ligase (445 aa).

ATP is bound at residue 110 to 116 (GSNGKTT).

This sequence belongs to the MurCDEF family.

The protein localises to the cytoplasm. It carries out the reaction UDP-N-acetyl-alpha-D-muramoyl-L-alanine + D-glutamate + ATP = UDP-N-acetyl-alpha-D-muramoyl-L-alanyl-D-glutamate + ADP + phosphate + H(+). Its pathway is cell wall biogenesis; peptidoglycan biosynthesis. Its function is as follows. Cell wall formation. Catalyzes the addition of glutamate to the nucleotide precursor UDP-N-acetylmuramoyl-L-alanine (UMA). In Christiangramia forsetii (strain DSM 17595 / CGMCC 1.15422 / KT0803) (Gramella forsetii), this protein is UDP-N-acetylmuramoylalanine--D-glutamate ligase.